The primary structure comprises 100 residues: Protamine-2 (100 aa).

The tract at residues 1–45 (MVRYHVRSPSERPHREYRQLVNGQEQGRHGQEEQGMSAEGVEGYG) is disordered. Ser-8, Ser-10, and Ser-37 each carry phosphoserine. Positions 8-18 (SPSERPHREYR) are enriched in basic and acidic residues.

It belongs to the protamine P2 family. As to quaternary structure, interacts with TDRP. Proteolytic processing into mature chains is required for histone eviction during spermatogenesis. Transition proteins (TNP1 and TNP2) are required for processing. Testis.

The protein resides in the nucleus. It is found in the chromosome. In terms of biological role, protamines substitute for histones in the chromatin of sperm during the haploid phase of spermatogenesis. They compact sperm DNA into a highly condensed, stable and inactive complex. In Alouatta seniculus (Red howler monkey), this protein is Protamine-2 (PRM2).